The chain runs to 594 residues: Adenine deaminase 1 (594 aa).

Belongs to the metallo-dependent hydrolases superfamily. Adenine deaminase family. Mn(2+) serves as cofactor.

The enzyme catalyses adenine + H2O + H(+) = hypoxanthine + NH4(+). The chain is Adenine deaminase 1 from Desulfotalea psychrophila (strain LSv54 / DSM 12343).